Reading from the N-terminus, the 412-residue chain is FAD-dependent monooxygenase nscC (412 aa).

The first 21 residues, M1–S21, serve as a signal peptide directing secretion. E35 and A46 together coordinate FAD. N-linked (GlcNAc...) asparagine glycosylation is found at N68 and N92. Residue R119 participates in FAD binding. N-linked (GlcNAc...) asparagine glycosylation is found at N170, N231, and N251. FAD-binding residues include D326 and G339.

This sequence belongs to the paxM FAD-dependent monooxygenase family. The cofactor is FAD.

It functions in the pathway secondary metabolite biosynthesis. Its function is as follows. FAD-dependent monooxygenase; part of the gene cluster that mediates the biosynthesis of neosartoricin B, a prenylated anthracenone that probably exhibits T-cell antiproliferative activity, suggestive of a physiological role as an immunosuppressive agent. The non-reducing polyketide synthase nscA probably synthesizes and cyclizes the decaketide backbone. The hydrolase nscB then mediates the product release through hydrolysis followed by spontaneous decarboxylation. The prenyltransferase nscD catalyzes the addition of the dimethylallyl group to the aromatic C5. The FAD-dependent monooxygenase nscC is then responsible for the stereospecific hydroxylation at C2. Neosartoricin B can be converted into two additional compounds neosartoricins C and D. Neosartoricin C is a spirocyclic compound that is cyclized through the attack of C3 hydroxyl on C14, followed by dehydration. On the other hand, neosartoricin D is a further cyclized compound in which attack of C2 on C14 in neosartoricin C results in the formation of the acetal-containing dioxabicyclo-octanone ring. Both of these compounds are novel and possibly represent related metabolites of the gene cluster. The chain is FAD-dependent monooxygenase nscC from Trichophyton rubrum (strain ATCC MYA-4607 / CBS 118892) (Athlete's foot fungus).